Consider the following 699-residue polypeptide: Elongation factor G (699 aa).

The 281-residue stretch at 8-288 (EDYRNFGIMA…AVVDYLPSPL (281 aa)) folds into the tr-type G domain. GTP-binding positions include 17-24 (AHIDAGKT), 86-90 (DTPGH), and 140-143 (NKMD).

This sequence belongs to the TRAFAC class translation factor GTPase superfamily. Classic translation factor GTPase family. EF-G/EF-2 subfamily.

The protein localises to the cytoplasm. Its function is as follows. Catalyzes the GTP-dependent ribosomal translocation step during translation elongation. During this step, the ribosome changes from the pre-translocational (PRE) to the post-translocational (POST) state as the newly formed A-site-bound peptidyl-tRNA and P-site-bound deacylated tRNA move to the P and E sites, respectively. Catalyzes the coordinated movement of the two tRNA molecules, the mRNA and conformational changes in the ribosome. This chain is Elongation factor G, found in Rhizobium etli (strain ATCC 51251 / DSM 11541 / JCM 21823 / NBRC 15573 / CFN 42).